The primary structure comprises 422 residues: Monoacylglycerol lipase ABHD2 (422 aa).

Residues 1 to 15 (MSAQLEADVRTMSPE) are Cytoplasmic-facing. Residues 16–36 (MPAMFDGMKLAAVAAVLYVIV) traverse the membrane as a helical; Signal-anchor for type II membrane protein segment. Residues 37 to 422 (RSLNLKCPTA…HKPQCHQQKE (386 aa)) are Extracellular-facing. The AB hydrolase-1 domain occupies 134 to 385 (MVICPGIGNH…HGGHLGFFEG (252 aa)). N-linked (GlcNAc...) asparagine glycosylation occurs at asparagine 142. Serine 213 serves as the catalytic Nucleophile. Residues asparagine 285, asparagine 335, and asparagine 344 are each glycosylated (N-linked (GlcNAc...) asparagine). Catalysis depends on charge relay system residues aspartate 348 and histidine 379.

It belongs to the AB hydrolase superfamily. AB hydrolase 4 family.

Its subcellular location is the cell membrane. It carries out the reaction Hydrolyzes glycerol monoesters of long-chain fatty acids.. The enzyme catalyses an acetyl ester + H2O = an aliphatic alcohol + acetate + H(+). The catalysed reaction is a triacylglycerol + H2O = a diacylglycerol + a fatty acid + H(+). It catalyses the reaction 2-(5Z,8Z,11Z,14Z-eicosatetraenoyl)-glycerol + H2O = glycerol + (5Z,8Z,11Z,14Z)-eicosatetraenoate + H(+). It carries out the reaction a butanoate ester + H2O = an aliphatic alcohol + butanoate + H(+). The enzyme catalyses hexadecanoate ester + H2O = an aliphatic alcohol + hexadecanoate + H(+). Its activity is regulated as follows. Acylglycerol lipase activity is activated upon binding to progesterone. Functionally, progesterone-dependent acylglycerol lipase that catalyzes hydrolysis of endocannabinoid arachidonoylglycerol (AG) from cell membrane. Acts as a progesterone receptor: progesterone-binding activates the acylglycerol lipase activity, mediating degradation of 1-arachidonoylglycerol (1AG) and 2-arachidonoylglycerol (2AG) to glycerol and arachidonic acid (AA). Also displays an ester hydrolase activity against acetyl ester, butanoate ester and hexadecanoate ester. Plays a key role in sperm capacitation in response to progesterone by mediating degradation of 2AG, an inhibitor of the sperm calcium channel CatSper, leading to calcium influx via CatSper and sperm activation. May also play a role in smooth muscle cells migration. This chain is Monoacylglycerol lipase ABHD2 (abhd2b), found in Danio rerio (Zebrafish).